Consider the following 124-residue polypeptide: Holo-[acyl-carrier-protein] synthase (124 aa).

D8 and E57 together coordinate Mg(2+).

It belongs to the P-Pant transferase superfamily. AcpS family. It depends on Mg(2+) as a cofactor.

The protein resides in the cytoplasm. It carries out the reaction apo-[ACP] + CoA = holo-[ACP] + adenosine 3',5'-bisphosphate + H(+). In terms of biological role, transfers the 4'-phosphopantetheine moiety from coenzyme A to a Ser of acyl-carrier-protein. In Leptospira borgpetersenii serovar Hardjo-bovis (strain JB197), this protein is Holo-[acyl-carrier-protein] synthase.